A 165-amino-acid chain; its full sequence is Mediator of RNA polymerase II transcription subunit 10 (165 aa).

Disordered regions lie at residues S54–L81 and L143–G165. Over residues T62–N77 the composition is skewed to polar residues.

This sequence belongs to the Mediator complex subunit 10 family. Component of the Mediator complex.

The protein resides in the nucleus. In terms of biological role, component of the Mediator complex, a coactivator involved in the regulated transcription of nearly all RNA polymerase II-dependent genes. Mediator functions as a bridge to convey information from gene-specific regulatory proteins to the basal RNA polymerase II transcription machinery. Mediator is recruited to promoters by direct interactions with regulatory proteins and serves as a scaffold for the assembly of a functional preinitiation complex with RNA polymerase II and the general transcription factors. This is Mediator of RNA polymerase II transcription subunit 10 (nut2) from Emericella nidulans (strain FGSC A4 / ATCC 38163 / CBS 112.46 / NRRL 194 / M139) (Aspergillus nidulans).